The sequence spans 392 residues: S-adenosylmethionine synthase (392 aa).

Residue His-20 participates in ATP binding. Asp-22 serves as a coordination point for Mg(2+). K(+) is bound at residue Glu-48. 2 residues coordinate L-methionine: Glu-61 and Gln-106. The segment at 106–116 is flexible loop; that stretch reads QSRDIINAIEK. Residues 171-173, Asp-248, 254-255, Ala-271, and Lys-275 contribute to the ATP site; these read DSK and RK. Asp-248 serves as a coordination point for L-methionine. Position 279 (Lys-279) interacts with L-methionine.

It belongs to the AdoMet synthase family. In terms of assembly, homotetramer; dimer of dimers. It depends on Mg(2+) as a cofactor. K(+) serves as cofactor.

The protein localises to the cytoplasm. The catalysed reaction is L-methionine + ATP + H2O = S-adenosyl-L-methionine + phosphate + diphosphate. The protein operates within amino-acid biosynthesis; S-adenosyl-L-methionine biosynthesis; S-adenosyl-L-methionine from L-methionine: step 1/1. Functionally, catalyzes the formation of S-adenosylmethionine (AdoMet) from methionine and ATP. The overall synthetic reaction is composed of two sequential steps, AdoMet formation and the subsequent tripolyphosphate hydrolysis which occurs prior to release of AdoMet from the enzyme. The chain is S-adenosylmethionine synthase from Borreliella afzelii (strain PKo) (Borrelia afzelii).